The primary structure comprises 529 residues: Putative UPF0481 protein At3g02645 (529 aa).

N-linked (GlcNAc...) asparagine glycans are attached at residues Asn365 and Asn403. A helical membrane pass occupies residues 498 to 518 (ILAFLAAVLLLMLVSLQLFSL).

The protein belongs to the UPF0481 family.

Its subcellular location is the membrane. The protein is Putative UPF0481 protein At3g02645 of Arabidopsis thaliana (Mouse-ear cress).